The chain runs to 171 residues: NADH-quinone oxidoreductase subunit I 1 (171 aa).

4Fe-4S ferredoxin-type domains lie at 39–71 (IVLTRDPDGQERCVACNLCAVVCPVGCIDLTKA) and 81–110 (EHFRINFARCIFCGFCEEACPTSAIQLTPD). [4Fe-4S] cluster-binding residues include C51, C54, C57, C61, C90, C93, C96, and C100.

It belongs to the complex I 23 kDa subunit family. NDH-1 is composed of 14 different subunits. Subunits NuoA, H, J, K, L, M, N constitute the membrane sector of the complex. [4Fe-4S] cluster is required as a cofactor.

Its subcellular location is the cell inner membrane. The catalysed reaction is a quinone + NADH + 5 H(+)(in) = a quinol + NAD(+) + 4 H(+)(out). In terms of biological role, NDH-1 shuttles electrons from NADH, via FMN and iron-sulfur (Fe-S) centers, to quinones in the respiratory chain. The immediate electron acceptor for the enzyme in this species is believed to be ubiquinone. Couples the redox reaction to proton translocation (for every two electrons transferred, four hydrogen ions are translocated across the cytoplasmic membrane), and thus conserves the redox energy in a proton gradient. In Rhodopseudomonas palustris (strain BisB5), this protein is NADH-quinone oxidoreductase subunit I 1.